A 302-amino-acid chain; its full sequence is MSWIIFYTIIFALLVLDLGVIHKKNEVMSFKQSLLFSLFYFTISCLFGIYIYYNMGADSTREYYTCFLIEKAMSLDNIFVISIIFQFFKIPQKYQHRVLFFGIIGVIAFRAVMIYGGIILINKFSWLLYIFAVILIATGVKTFYVSHKTFDIQNSYLYKSIIKYLNVTPNLEGDKFFVTRNKKLYVTPLFISLILIEAIDLVFAIDSIPAIFAITNDAYIIYTSNIFAILGLRALFFCLAEIVERFSYIKYSLALILIFIGIKIFIHHYIAIPAYISLTVTITLLLLGIFASVIRKNIVDRQ.

A run of 9 helical transmembrane segments spans residues 1–21 (MSWI…LGVI), 33–53 (SLLF…YIYY), 67–87 (FLIE…IFQF), 101–121 (FGII…IILI), 124–144 (FSWL…KTFY), 185–205 (YVTP…VFAI), 220–240 (IIYT…FCLA), 253–273 (LALI…IAIP), and 274–294 (AYIS…ASVI).

It belongs to the TerC family.

The protein resides in the cell membrane. This is an uncharacterized protein from Rickettsia bellii (strain RML369-C).